The sequence spans 628 residues: Translation factor GUF1, mitochondrial (628 aa).

In terms of domain architecture, tr-type G spans 27-209 (LPSRNFSIIA…AIISRIPPPS (183 aa)). GTP is bound by residues 36 to 43 (AHIDHGKS), 102 to 106 (DTPGH), and 156 to 159 (NKID).

This sequence belongs to the TRAFAC class translation factor GTPase superfamily. Classic translation factor GTPase family. LepA subfamily.

The protein resides in the mitochondrion inner membrane. The enzyme catalyses GTP + H2O = GDP + phosphate + H(+). Promotes mitochondrial protein synthesis. May act as a fidelity factor of the translation reaction, by catalyzing a one-codon backward translocation of tRNAs on improperly translocated ribosomes. Binds to mitochondrial ribosomes in a GTP-dependent manner. The protein is Translation factor GUF1, mitochondrial of Laccaria bicolor (strain S238N-H82 / ATCC MYA-4686) (Bicoloured deceiver).